Here is a 516-residue protein sequence, read N- to C-terminus: Effector protein hopAB1 (516 aa).

Disordered regions lie at residues 1 to 93 (MSGI…AQPA) and 175 to 259 (RALA…DEAL). Residues 16 to 30 (WRADDEPVTERERDS) are compositionally biased toward basic and acidic residues. The span at 31–41 (SSGANLTNSPQ) shows a compositional bias: polar residues. Positions 81 to 90 (PVEPRQPPEA) are enriched in pro residues. Composition is skewed to low complexity over residues 183-196 (PAPS…SRSS) and 212-224 (QTSS…SSTS).

This sequence belongs to the HopAB family.

The protein localises to the secreted. Its function is as follows. Effector protein that plays different roles depending on the species and plant cultivars that interact with the pathogen. Acts as a virulence determinant by enhancing the development of disease symptoms and bacterial growth. Acts as an avirulence factor by eliciting hypersensitive response (HR) and plant resistance. This Pseudomonas syringae pv. syringae (strain B728a) protein is Effector protein hopAB1 (hopAB1).